The following is an 82-amino-acid chain: uncharacterized protein (82 aa).

Transmembrane regions (helical) follow at residues 4–26 (LDIA…TCIC), 31–48 (LMPM…FTIF), and 52–74 (FLGW…LIVV).

It is found in the cell membrane. This is an uncharacterized protein from Bacillus subtilis (strain 168).